Here is a 38-residue protein sequence, read N- to C-terminus: Potassium channel toxin alpha-KTx 3.12 (38 aa).

3 disulfide bridges follow: Cys-8-Cys-28, Cys-14-Cys-33, and Cys-18-Cys-35. Residue Lys-38 is modified to Lysine amide.

Belongs to the short scorpion toxin superfamily. Potassium channel inhibitor family. Alpha-KTx 03 subfamily. As to expression, expressed by the venom gland.

Its subcellular location is the secreted. Functionally, potent inhibitor of voltage-dependent potassium channels, with a preference for Kv1.3/KCNA3 versus Kv1.2/KCNA2. The chain is Potassium channel toxin alpha-KTx 3.12 from Androctonus amoreuxi (African fattail scorpion).